Here is a 313-residue protein sequence, read N- to C-terminus: Porphobilinogen deaminase (313 aa).

Cysteine 242 carries the S-(dipyrrolylmethanemethyl)cysteine modification.

This sequence belongs to the HMBS family. In terms of assembly, monomer. Dipyrromethane serves as cofactor.

The enzyme catalyses 4 porphobilinogen + H2O = hydroxymethylbilane + 4 NH4(+). Its pathway is porphyrin-containing compound metabolism; protoporphyrin-IX biosynthesis; coproporphyrinogen-III from 5-aminolevulinate: step 2/4. Functionally, tetrapolymerization of the monopyrrole PBG into the hydroxymethylbilane pre-uroporphyrinogen in several discrete steps. This is Porphobilinogen deaminase from Shigella flexneri.